Consider the following 283-residue polypeptide: Bifunctional protein FolD (283 aa).

Residues 165 to 167 and Ser-190 contribute to the NADP(+) site; that span reads GRS.

Belongs to the tetrahydrofolate dehydrogenase/cyclohydrolase family. In terms of assembly, homodimer.

The catalysed reaction is (6R)-5,10-methylene-5,6,7,8-tetrahydrofolate + NADP(+) = (6R)-5,10-methenyltetrahydrofolate + NADPH. It carries out the reaction (6R)-5,10-methenyltetrahydrofolate + H2O = (6R)-10-formyltetrahydrofolate + H(+). It participates in one-carbon metabolism; tetrahydrofolate interconversion. Functionally, catalyzes the oxidation of 5,10-methylenetetrahydrofolate to 5,10-methenyltetrahydrofolate and then the hydrolysis of 5,10-methenyltetrahydrofolate to 10-formyltetrahydrofolate. In Methylibium petroleiphilum (strain ATCC BAA-1232 / LMG 22953 / PM1), this protein is Bifunctional protein FolD.